We begin with the raw amino-acid sequence, 35 residues long: U14-ctenitoxin-Pn1a (35 aa).

3 disulfide bridges follow: Cys-3–Cys-17, Cys-10–Cys-22, and Cys-16–Cys-32.

In terms of tissue distribution, expressed by the venom gland.

Its subcellular location is the secreted. Neurotoxin. The chain is U14-ctenitoxin-Pn1a from Phoneutria nigriventer (Brazilian armed spider).